The sequence spans 446 residues: Phosphoglucosamine mutase (446 aa).

Ser103 functions as the Phosphoserine intermediate in the catalytic mechanism. Mg(2+) contacts are provided by Ser103, Asp242, Asp244, and Asp246. Position 103 is a phosphoserine (Ser103).

This sequence belongs to the phosphohexose mutase family. Mg(2+) is required as a cofactor. Post-translationally, activated by phosphorylation.

The enzyme catalyses alpha-D-glucosamine 1-phosphate = D-glucosamine 6-phosphate. In terms of biological role, catalyzes the conversion of glucosamine-6-phosphate to glucosamine-1-phosphate. In Vibrio cholerae serotype O1 (strain ATCC 39541 / Classical Ogawa 395 / O395), this protein is Phosphoglucosamine mutase.